A 244-amino-acid chain; its full sequence is Transcriptional activator protein Anr (244 aa).

21-149 contributes to the a nucleoside 3',5'-cyclic phosphate binding site; sequence APLCLPLSLN…RVMSREIRDD (129 aa). Positions 159–232 constitute an HTH crp-type domain; the sequence is KTADERIATF…GKEVHILDPI (74 aa). A DNA-binding region (H-T-H motif) is located at residues 192 to 211; the sequence is RNEIGNYLGLAVETVSRVFT.

Functionally, transcriptional activator of anaerobic gene expression. Regulates the expression of the components of the hydrogen cyanide synthase (HcnABC) in a positive manner. May also act as an iron sensor. The protein is Transcriptional activator protein Anr of Pseudomonas protegens (strain DSM 19095 / LMG 27888 / CFBP 6595 / CHA0).